Reading from the N-terminus, the 208-residue chain is Small ribosomal subunit protein uS4 (208 aa).

The S4 RNA-binding domain occupies Gly98–Lys158.

This sequence belongs to the universal ribosomal protein uS4 family. As to quaternary structure, part of the 30S ribosomal subunit. Contacts protein S5. The interaction surface between S4 and S5 is involved in control of translational fidelity.

Its function is as follows. One of the primary rRNA binding proteins, it binds directly to 16S rRNA where it nucleates assembly of the body of the 30S subunit. With S5 and S12 plays an important role in translational accuracy. The polypeptide is Small ribosomal subunit protein uS4 (Actinobacillus pleuropneumoniae serotype 5b (strain L20)).